Reading from the N-terminus, the 624-residue chain is Ceramide transfer protein (624 aa).

A compositionally biased stretch (polar residues) spans 1–11; sequence MSDNQSWNSSG. The interval 1 to 24 is disordered; that stretch reads MSDNQSWNSSGSEEDPETESGPPV. One can recognise a PH domain in the interval 23-117; that stretch reads PVERCGVLSK…WIDAIEQHKT (95 aa). S126 carries the phosphoserine modification. S132 carries the phosphoserine; by PKD modification. S135 is modified (phosphoserine). The stretch at 263–303 forms a coiled coil; it reads IELMVKREDSWQKRLDKETEKKRRTEEAYKNAMTELKKKSH. Phosphoserine is present on S315. The FFAT motif lies at 321–327; the sequence is EFFDAVE. The residue at position 372 (Y372) is a Phosphotyrosine. A phosphoserine mark is found at S373, S377, and S380. The START domain occupies 389–618; the sequence is DVHRFSSQVE…FTSYVQEKTA (230 aa). The an N-acylsphing-4-enine site is built by E472, Q493, N530, and Y579.

In terms of assembly, interacts with VAPA and VAPB. Interaction with VAPB is less efficient than with VAPA. Interacts (via FFAT motif) with the MOSPD2 (via MSP domain). Post-translationally, phosphorylation on Ser-132 decreases the affinity toward phosphatidylinositol 4-phosphate at Golgi membranes and reduces ceramide transfer activity. Inactivated by hyperphosphorylation of serine residues by CSNK1G2/CK1 that triggers dissociation from the Golgi complex, thus down-regulating ER-to-Golgi transport of ceramide and sphingomyelin synthesis.

The protein resides in the cytoplasm. It localises to the golgi apparatus. The protein localises to the endoplasmic reticulum. The enzyme catalyses N-hexadecanoylsphing-4-enine(in) = N-hexadecanoylsphing-4-enine(out). Functionally, shelters ceramides and diacylglycerol lipids inside its START domain and mediates the intracellular trafficking of ceramides and diacylglycerol lipids in a non-vesicular manner. The protein is Ceramide transfer protein (CERT1) of Pongo abelii (Sumatran orangutan).